The primary structure comprises 933 residues: Protein translocase subunit SecA (933 aa).

Residues glutamine 87, 105 to 109 (GEGKT), and aspartate 515 each bind ATP. 3 disordered regions span residues 567–588 (ESRR…PGSS), 840–861 (DVEA…RHAA), and 880–933 (AAAE…CGKL). Residues 845–856 (EEQRRQEAERMQ) show a composition bias toward basic and acidic residues. Residues 880–897 (AAAEGDSAPTGGAQQQSA) show a composition bias toward low complexity. Residues 905–914 (VAREGPKVGR) show a composition bias toward basic and acidic residues. The Zn(2+) site is built by cysteine 918, cysteine 920, cysteine 929, and cysteine 930. Positions 924–933 (KKYKHCCGKL) are enriched in basic residues.

This sequence belongs to the SecA family. Monomer and homodimer. Part of the essential Sec protein translocation apparatus which comprises SecA, SecYEG and auxiliary proteins SecDF-YajC and YidC. Zn(2+) is required as a cofactor.

It is found in the cell inner membrane. The protein localises to the cytoplasm. The catalysed reaction is ATP + H2O + cellular proteinSide 1 = ADP + phosphate + cellular proteinSide 2.. In terms of biological role, part of the Sec protein translocase complex. Interacts with the SecYEG preprotein conducting channel. Has a central role in coupling the hydrolysis of ATP to the transfer of proteins into and across the cell membrane, serving both as a receptor for the preprotein-SecB complex and as an ATP-driven molecular motor driving the stepwise translocation of polypeptide chains across the membrane. This Halorhodospira halophila (strain DSM 244 / SL1) (Ectothiorhodospira halophila (strain DSM 244 / SL1)) protein is Protein translocase subunit SecA.